Reading from the N-terminus, the 508-residue chain is Steroid 17-alpha-hydroxylase/17,20 lyase (508 aa).

Asparagine 202 is a substrate binding site. A heme-binding site is contributed by cysteine 442.

This sequence belongs to the cytochrome P450 family. Requires heme as cofactor.

Its subcellular location is the endoplasmic reticulum membrane. It localises to the microsome membrane. The enzyme catalyses a C21-steroid + reduced [NADPH--hemoprotein reductase] + O2 = a 17alpha-hydroxy-C21-steroid + oxidized [NADPH--hemoprotein reductase] + H2O + H(+). The catalysed reaction is progesterone + reduced [NADPH--hemoprotein reductase] + O2 = 17alpha-hydroxyprogesterone + oxidized [NADPH--hemoprotein reductase] + H2O + H(+). It catalyses the reaction pregnenolone + reduced [NADPH--hemoprotein reductase] + O2 = 17alpha-hydroxypregnenolone + oxidized [NADPH--hemoprotein reductase] + H2O + H(+). It carries out the reaction 17alpha-hydroxyprogesterone + reduced [NADPH--hemoprotein reductase] + O2 = androst-4-ene-3,17-dione + acetate + oxidized [NADPH--hemoprotein reductase] + H2O + 2 H(+). The enzyme catalyses 17alpha-hydroxyprogesterone + reduced [NADPH--hemoprotein reductase] + O2 = 16alpha,17alpha-dihydroxyprogesterone + oxidized [NADPH--hemoprotein reductase] + H2O + H(+). The catalysed reaction is 16alpha,17alpha-dihydroxyprogesterone + reduced [NADPH--hemoprotein reductase] + O2 = 6beta,16alpha,17alpha-trihydroxyprogesterone + oxidized [NADPH--hemoprotein reductase] + H2O + H(+). It catalyses the reaction 17alpha-hydroxypregnenolone + reduced [NADPH--hemoprotein reductase] + O2 = 3beta-hydroxyandrost-5-en-17-one + acetate + oxidized [NADPH--hemoprotein reductase] + H2O + 2 H(+). It carries out the reaction 16alpha,17alpha-dihydroxypregnenolone + reduced [NADPH--hemoprotein reductase] + O2 = 3beta,16alpha-dihydroxy-androst-5-en-17-one + acetate + oxidized [NADPH--hemoprotein reductase] + H2O + 2 H(+). The enzyme catalyses 3beta-hydroxyandrost-5-en-17-one + reduced [NADPH--hemoprotein reductase] + O2 = 3beta,16alpha-dihydroxy-androst-5-en-17-one + oxidized [NADPH--hemoprotein reductase] + H2O + H(+). The catalysed reaction is androst-4-ene-3,17-dione + reduced [NADPH--hemoprotein reductase] + O2 = 16alpha-hydroxyandrost-4-ene-3,17-dione + oxidized [NADPH--hemoprotein reductase] + H2O + H(+). The protein operates within steroid hormone biosynthesis. It participates in steroid biosynthesis; glucocorticoid biosynthesis. With respect to regulation, regulated predominantly by intracellular cAMP levels. The 17,20-lyase activity is stimulated by cytochrome b5, which acts as an allosteric effector increasing the Vmax of the lyase activity. Functionally, a cytochrome P450 monooxygenase involved in corticoid and androgen biosynthesis. Catalyzes 17-alpha hydroxylation of C21 steroids, which is common for both pathways. A second oxidative step, required only for androgen synthesis, involves an acyl-carbon cleavage. The 17-alpha hydroxy intermediates, as part of adrenal glucocorticoids biosynthesis pathway, are precursors of cortisol. Hydroxylates steroid hormones, pregnenolone and progesterone to form 17-alpha hydroxy metabolites, followed by the cleavage of the C17-C20 bond to form C19 steroids, dehydroepiandrosterone (DHEA) and androstenedione. Has 16-alpha hydroxylase activity. Catalyzes 16-alpha hydroxylation of 17-alpha hydroxy pregnenolone, followed by the cleavage of the C17-C20 bond to form 16-alpha-hydroxy DHEA. Also 16-alpha hydroxylates androgens, relevant for estriol synthesis. Mechanistically, uses molecular oxygen inserting one oxygen atom into a substrate, and reducing the second into a water molecule, with two electrons provided by NADPH via cytochrome P450 reductase (CPR; NADPH-ferrihemoprotein reductase). This Papio cynocephalus (Yellow baboon) protein is Steroid 17-alpha-hydroxylase/17,20 lyase (CYP17A1).